A 366-amino-acid chain; its full sequence is D-alanine--D-alanine ligase (366 aa).

In terms of domain architecture, ATP-grasp spans 150-353; that stretch reads KRVLRDAGVP…YPALVDRLIV (204 aa). 180–235 contributes to the ATP binding site; the sequence is IGQLGLPLFIKPASQGSSVGVSKVTDRAGFAAALALAFRYDAKVLVEQGISGREIE. Aspartate 307, glutamate 320, and asparagine 322 together coordinate Mg(2+).

The protein belongs to the D-alanine--D-alanine ligase family. Requires Mg(2+) as cofactor. Mn(2+) is required as a cofactor.

It localises to the cytoplasm. The enzyme catalyses 2 D-alanine + ATP = D-alanyl-D-alanine + ADP + phosphate + H(+). Its pathway is cell wall biogenesis; peptidoglycan biosynthesis. Cell wall formation. In Sodalis glossinidius (strain morsitans), this protein is D-alanine--D-alanine ligase.